The primary structure comprises 209 residues: Large ribosomal subunit protein uL3 (209 aa).

Position 150 is an N5-methylglutamine (Gln150).

This sequence belongs to the universal ribosomal protein uL3 family. As to quaternary structure, part of the 50S ribosomal subunit. Forms a cluster with proteins L14 and L19. Post-translationally, methylated by PrmB.

One of the primary rRNA binding proteins, it binds directly near the 3'-end of the 23S rRNA, where it nucleates assembly of the 50S subunit. The polypeptide is Large ribosomal subunit protein uL3 (Vibrio campbellii (strain ATCC BAA-1116)).